The chain runs to 621 residues: Threonine--tRNA ligase (621 aa).

The tract at residues 1–137 (MRILQLHCDS…ESSKVVTKDS (137 aa)) is editing domain. The tract at residues 128–150 (ESSKVVTKDSTTKDDDEDTSDAL) is disordered. Residues 202-501 (PHVALMKKLA…SKKGKKPQLP (300 aa)) are catalytic. 3 residues coordinate Zn(2+): Cys294, His346, and His470. The segment covering 598-612 (QTSGKPYTGLNQSQH) has biased composition (polar residues). The segment at 598–621 (QTSGKPYTGLNQSQHLSKRPQLMV) is disordered.

This sequence belongs to the class-II aminoacyl-tRNA synthetase family. As to quaternary structure, homodimer. Zn(2+) is required as a cofactor.

It localises to the cytoplasm. The catalysed reaction is tRNA(Thr) + L-threonine + ATP = L-threonyl-tRNA(Thr) + AMP + diphosphate + H(+). Functionally, catalyzes the attachment of threonine to tRNA(Thr) in a two-step reaction: L-threonine is first activated by ATP to form Thr-AMP and then transferred to the acceptor end of tRNA(Thr). Also edits incorrectly charged L-seryl-tRNA(Thr). The protein is Threonine--tRNA ligase of Nitrosopumilus maritimus (strain SCM1).